Reading from the N-terminus, the 366-residue chain is Outer membrane porin C 2 (366 aa).

The first 21 residues, 1 to 21 (MKLKIVAVVVTGLLAANVAHA), serve as a signal peptide directing secretion.

It belongs to the Gram-negative porin family. As to quaternary structure, homotrimer. Forms mixed heterotrimers with OmpF and with PhoE; other mixed heterotrimers are also probable.

The protein resides in the cell outer membrane. Its function is as follows. Forms pores that allow passive diffusion of small molecules across the outer membrane. Plays a role in virulence. This Shigella flexneri serotype 5a (strain M90T) protein is Outer membrane porin C 2.